Here is a 346-residue protein sequence, read N- to C-terminus: Probable electron transfer flavoprotein subunit alpha, mitochondrial (346 aa).

Residue 285–313 (LYVAVGISGAIQHLAGMKESKMIVAINKD) coordinates FAD.

It belongs to the ETF alpha-subunit/FixB family. As to quaternary structure, heterodimer of an alpha and a beta subunit. FAD serves as cofactor.

The protein resides in the mitochondrion matrix. Its function is as follows. The electron transfer flavoprotein serves as a specific electron acceptor for several dehydrogenases, including five acyl-CoA dehydrogenases, glutaryl-CoA and sarcosine dehydrogenase. It transfers the electrons to the main mitochondrial respiratory chain via ETF-ubiquinone oxidoreductase (ETF dehydrogenase). This chain is Probable electron transfer flavoprotein subunit alpha, mitochondrial (ETF1), found in Cryptococcus neoformans var. grubii (Filobasidiella neoformans var. grubii).